The primary structure comprises 323 residues: Cyclin-H (323 aa).

The residue at position 5 (S5) is a Phosphoserine; by CDK8. At S132 the chain carries Phosphoserine. The interval 299–323 is disordered; the sequence is DDDYVPKKSKHEEEEWTDDDLVESL. The span at 302-311 shows a compositional bias: basic and acidic residues; it reads YVPKKSKHEE. Acidic residues predominate over residues 312–323; that stretch reads EEWTDDDLVESL. T315 carries the phosphothreonine modification. At S322 the chain carries Phosphoserine.

This sequence belongs to the cyclin family. Cyclin C subfamily. As to quaternary structure, associates primarily with CDK7 and MAT1 to form the CAK complex. CAK can further associate with the core-TFIIH to form the TFIIH basal transcription factor.

Its subcellular location is the nucleus. Its function is as follows. Regulates CDK7, the catalytic subunit of the CDK-activating kinase (CAK) enzymatic complex. CAK activates the cyclin-associated kinases CDK1, CDK2, CDK4 and CDK6 by threonine phosphorylation. CAK complexed to the core-TFIIH basal transcription factor activates RNA polymerase II by serine phosphorylation of the repetitive C-terminal domain (CTD) of its large subunit (POLR2A), allowing its escape from the promoter and elongation of the transcripts. Involved in cell cycle control and in RNA transcription by RNA polymerase II. Its expression and activity are constant throughout the cell cycle. The sequence is that of Cyclin-H (CCNH) from Macaca fascicularis (Crab-eating macaque).